The sequence spans 291 residues: Protein/nucleic acid deglycase HchA (291 aa).

Residues M1 to H18 are compositionally biased toward basic and acidic residues. The tract at residues M1–A20 is disordered. C188 (nucleophile) is an active-site residue.

Belongs to the peptidase C56 family. HchA subfamily.

Its subcellular location is the cytoplasm. The enzyme catalyses N(omega)-(1-hydroxy-2-oxopropyl)-L-arginyl-[protein] + H2O = lactate + L-arginyl-[protein] + H(+). The catalysed reaction is N(6)-(1-hydroxy-2-oxopropyl)-L-lysyl-[protein] + H2O = lactate + L-lysyl-[protein] + H(+). It carries out the reaction S-(1-hydroxy-2-oxopropyl)-L-cysteinyl-[protein] + H2O = lactate + L-cysteinyl-[protein] + H(+). It catalyses the reaction N(omega)-(1-hydroxy-2-oxoethyl)-L-arginyl-[protein] + H2O = L-arginyl-[protein] + glycolate + H(+). The enzyme catalyses N(6)-(1-hydroxy-2-oxoethyl)-L-lysyl-[protein] + H2O = glycolate + L-lysyl-[protein] + H(+). The catalysed reaction is S-(1-hydroxy-2-oxoethyl)-L-cysteinyl-[protein] + H2O = glycolate + L-cysteinyl-[protein] + H(+). It carries out the reaction N(2)-(1-hydroxy-2-oxopropyl)-dGTP + H2O = lactate + dGTP + H(+). It catalyses the reaction N(2)-(1-hydroxy-2-oxopropyl)-GTP + H2O = lactate + GTP + H(+). The enzyme catalyses N(2)-(1-hydroxy-2-oxopropyl)-GDP + H2O = lactate + GDP + H(+). The catalysed reaction is N(2)-(1-hydroxy-2-oxopropyl)-GMP + H2O = lactate + GMP + H(+). It carries out the reaction N(2)-(1-hydroxy-2-oxoethyl)-dGTP + H2O = dGTP + glycolate + H(+). It catalyses the reaction N(2)-(1-hydroxy-2-oxoethyl)-GTP + H2O = glycolate + GTP + H(+). The enzyme catalyses N(2)-(1-hydroxy-2-oxoethyl)-GDP + H2O = glycolate + GDP + H(+). The catalysed reaction is N(2)-(1-hydroxy-2-oxoethyl)-GMP + H2O = glycolate + GMP + H(+). It carries out the reaction an N(2)-(1-hydroxy-2-oxopropyl)-guanosine in RNA + H2O = a guanosine in RNA + lactate + H(+). It catalyses the reaction an N(2)-(1-hydroxy-2-oxopropyl)-2'-deoxyguanosine in DNA + H2O = a 2'-deoxyguanosine in DNA + lactate + H(+). The enzyme catalyses an N(2)-(1-hydroxy-2-oxoethyl)-guanosine in RNA + H2O = a guanosine in RNA + glycolate + H(+). The catalysed reaction is an N(2)-(1-hydroxy-2-oxoethyl)-2'-deoxyguanosine in DNA + H2O = a 2'-deoxyguanosine in DNA + glycolate + H(+). Protein and nucleotide deglycase that catalyzes the deglycation of the Maillard adducts formed between amino groups of proteins or nucleotides and reactive carbonyl groups of glyoxals. Thus, functions as a protein deglycase that repairs methylglyoxal- and glyoxal-glycated proteins, and releases repaired proteins and lactate or glycolate, respectively. Deglycates cysteine, arginine and lysine residues in proteins, and thus reactivates these proteins by reversing glycation by glyoxals. Acts on early glycation intermediates (hemithioacetals and aminocarbinols), preventing the formation of Schiff bases and advanced glycation endproducts (AGE). Also functions as a nucleotide deglycase able to repair glycated guanine in the free nucleotide pool (GTP, GDP, GMP, dGTP) and in DNA and RNA. Is thus involved in a major nucleotide repair system named guanine glycation repair (GG repair), dedicated to reversing methylglyoxal and glyoxal damage via nucleotide sanitization and direct nucleic acid repair. Plays an important role in protecting cells from carbonyl stress. The protein is Protein/nucleic acid deglycase HchA of Pseudomonas aeruginosa (strain LESB58).